The following is a 197-amino-acid chain: MKDLTERQRKVLLFIEEFIEKNGYPPSVREIARRFRITPRGALLHLIALEKKGYIERKNGKPRALRVSKSIRNKIPLIGEIRAGEKREAIEYLEDYIEIPESFLSSGYDHFLLKVKGESMIEEHICDGDLVLVRRQDWAQNGDIVAAMVDGEVTLKKFYQRGDTVELRPANREMSSMFFKAEKVKILGKVVGVFRKL.

A DNA-binding region (H-T-H motif) is located at residues Val28–Ile47. Residues Ser119 and Lys156 each act as for autocatalytic cleavage activity in the active site.

This sequence belongs to the peptidase S24 family. Homodimer.

The enzyme catalyses Hydrolysis of Ala-|-Gly bond in repressor LexA.. In terms of biological role, represses a number of genes involved in the response to DNA damage (SOS response), including recA and lexA. In the presence of single-stranded DNA, RecA interacts with LexA causing an autocatalytic cleavage which disrupts the DNA-binding part of LexA, leading to derepression of the SOS regulon and eventually DNA repair. This chain is LexA repressor, found in Thermotoga sp. (strain RQ2).